A 316-amino-acid polypeptide reads, in one-letter code: Homoserine kinase (316 aa).

97 to 107 (PPARGLGSSAS) contributes to the ATP binding site.

It belongs to the GHMP kinase family. Homoserine kinase subfamily.

It is found in the cytoplasm. The enzyme catalyses L-homoserine + ATP = O-phospho-L-homoserine + ADP + H(+). Its pathway is amino-acid biosynthesis; L-threonine biosynthesis; L-threonine from L-aspartate: step 4/5. Its function is as follows. Catalyzes the ATP-dependent phosphorylation of L-homoserine to L-homoserine phosphate. The sequence is that of Homoserine kinase from Prochlorococcus marinus (strain MIT 9303).